Reading from the N-terminus, the 971-residue chain is uncharacterized protein (971 aa).

Positions 1-24 (MQSNLLKVLGVLAIVATLVCFIFA) are cleaved as a signal peptide. Residues 127 to 146 (RTRPGKSNLDDSNQMIPIPR) form a disordered region. The next 6 helical transmembrane spans lie at 611–631 (IKAILILYVMTYGAMFLLGFA), 721–741 (LGLSGIIYFIITFIAVCIVII), 753–773 (AFMATCILIGIAPLFISFLLF), 795–815 (VVMMAGIIVLTQLFTIYLDFV), 832–852 (FIGTILPIALLNVPIFCINWF), and 865–885 (GVNMQNIVALVIIAYGMYGYV). Basic residues predominate over residues 933–944 (TSRAKSRLKQRN). Positions 933 to 971 (TSRAKSRLKQRNRTLEHAEQNSKKYMKKIGENTNEGTLK) are disordered. Over residues 945-954 (RTLEHAEQNS) the composition is skewed to basic and acidic residues.

It belongs to the TrbL/VirB6 family.

The protein localises to the cell membrane. This is an uncharacterized protein from Rickettsia typhi (strain ATCC VR-144 / Wilmington).